Consider the following 397-residue polypeptide: Putative efflux system protein YvrP (397 aa).

The chain crosses the membrane as a helical span at residues 8–28 (LIGGAICAGVLVLAGIGAGGF). Positions 106-183 (EDHSDEVEQA…KELAGLTKNK (78 aa)) form a coiled coil.

It belongs to the membrane fusion protein (MFP) (TC 8.A.1) family.

Its subcellular location is the cell membrane. The polypeptide is Putative efflux system protein YvrP (yvrP) (Bacillus subtilis (strain 168)).